Reading from the N-terminus, the 230-residue chain is Probable nicotinate-nucleotide adenylyltransferase (230 aa).

This sequence belongs to the NadD family.

The enzyme catalyses nicotinate beta-D-ribonucleotide + ATP + H(+) = deamido-NAD(+) + diphosphate. It participates in cofactor biosynthesis; NAD(+) biosynthesis; deamido-NAD(+) from nicotinate D-ribonucleotide: step 1/1. Functionally, catalyzes the reversible adenylation of nicotinate mononucleotide (NaMN) to nicotinic acid adenine dinucleotide (NaAD). The polypeptide is Probable nicotinate-nucleotide adenylyltransferase (Pseudomonas putida (strain ATCC 47054 / DSM 6125 / CFBP 8728 / NCIMB 11950 / KT2440)).